Consider the following 249-residue polypeptide: tRNA pseudouridine synthase A (249 aa).

The Nucleophile role is filled by D53. Substrate is bound at residue Y111.

The protein belongs to the tRNA pseudouridine synthase TruA family. In terms of assembly, homodimer.

The catalysed reaction is uridine(38/39/40) in tRNA = pseudouridine(38/39/40) in tRNA. Its function is as follows. Formation of pseudouridine at positions 38, 39 and 40 in the anticodon stem and loop of transfer RNAs. This is tRNA pseudouridine synthase A from Streptococcus pneumoniae serotype 19F (strain G54).